The following is a 339-amino-acid chain: RNA polymerase principal sigma factor HrdC (339 aa).

Low complexity predominate over residues 1–10; sequence MAPTARTPTA. Disordered stretches follow at residues 1–37 and 71–101; these read MAPT…EEPD and REEL…DGQE. Basic and acidic residues predominate over residues 91–101; it reads TLEETVHDGQE. The Polymerase core binding signature appears at 130 to 143; that stretch reads DVIQEGNLGLIRAV. The segment at residues 300-319 is a DNA-binding region (H-T-H motif); sequence LQQVAQHVGLTRERVRQLEK.

This sequence belongs to the sigma-70 factor family. As to quaternary structure, interacts transiently with the RNA polymerase catalytic core.

Sigma factors are initiation factors that promote the attachment of RNA polymerase to specific initiation sites and are then released. The chain is RNA polymerase principal sigma factor HrdC (hrdC) from Streptomyces coelicolor (strain ATCC BAA-471 / A3(2) / M145).